Consider the following 368-residue polypeptide: tRNA(Met) cytidine acetate ligase (368 aa).

Residues 7-20 (IAEF…HKYL), glycine 96, asparagine 152, and arginine 175 contribute to the ATP site.

The protein belongs to the TmcAL family.

The protein localises to the cytoplasm. The catalysed reaction is cytidine(34) in elongator tRNA(Met) + acetate + ATP = N(4)-acetylcytidine(34) in elongator tRNA(Met) + AMP + diphosphate. Its function is as follows. Catalyzes the formation of N(4)-acetylcytidine (ac(4)C) at the wobble position of elongator tRNA(Met), using acetate and ATP as substrates. First activates an acetate ion to form acetyladenylate (Ac-AMP) and then transfers the acetyl group to tRNA to form ac(4)C34. The polypeptide is tRNA(Met) cytidine acetate ligase (Streptococcus pyogenes serotype M5 (strain Manfredo)).